Reading from the N-terminus, the 897-residue chain is Schlafen family member 13 (897 aa).

Residues 2–355 (EANHCSLGVY…WVEKMMDADP (354 aa)) form a n'-domain region region. Active-site residues include Glu-208 and Glu-213. 3 residues coordinate Zn(2+): His-284, Cys-286, and Cys-321. 599–606 (GLPGSGKT) is an ATP binding site.

Belongs to the Schlafen family. Subgroup III subfamily. The cofactor is Mg(2+).

Its subcellular location is the cytoplasm. Functionally, endoribonuclease that cleaves tRNAs and rRNAs. Cleaves tRNAs 11 nucleotides from the 3'-terminus at the acceptor stem. Does not act on tRNA(Sec). Able to restrict HIV-1 virus replication; ability to inhibit HIV-1 replication is dependent on endoribonuclease activity. The protein is Schlafen family member 13 of Homo sapiens (Human).